The primary structure comprises 1284 residues: Neurexin-4 (1284 aa).

Residues 1–35 (MRPPRSNTKAAFSSLQFGLLCLLLLVNNGIKSVQA) form the signal peptide. Topologically, residues 36 to 1217 (DAFTDYFSDY…LRKAYNEVDS (1182 aa)) are extracellular. In terms of domain architecture, F5/8 type C spans 47–185 (CNQPLMERAV…ISMRVELYGC (139 aa)). A disulfide bond links Cys-47 and Cys-185. Residues Asn-195, Asn-329, Asn-340, and Asn-398 are each glycosylated (N-linked (GlcNAc...) asparagine). The Laminin G-like 1 domain occupies 220–369 (FKTAFANGVM…FTRVNTIYAC (150 aa)). Cys-333 and Cys-369 are disulfide-bonded. The 138-residue stretch at 403–540 (FRTYEETGVM…CGDDVVVDAC (138 aa)) folds into the Laminin G-like 2 domain. 4 cysteine pairs are disulfide-bonded: Cys-507/Cys-540, Cys-546/Cys-557, Cys-551/Cys-566, and Cys-568/Cys-578. The EGF-like 1 domain maps to 542 to 579 (MIDRCNPNPCQHKGLCHQNSREFFCDCGHTGYAGAVCH). N-linked (GlcNAc...) asparagine glycosylation occurs at Asn-668. The 139-residue stretch at 824–962 (FRTTQENSVI…RGLYGISTGC (139 aa)) folds into the Laminin G-like 3 domain. Disulfide bonds link Cys-934-Cys-962, Cys-966-Cys-977, Cys-971-Cys-986, and Cys-988-Cys-998. The EGF-like 2 domain occupies 962–999 (CVGRCESNPCLNNGTCIERYDGYSCDCRWSAFKGPICA). An N-linked (GlcNAc...) asparagine glycan is attached at Asn-974. Residues 1032–1183 (FTTTIPKGFL…LGTQLTEDFC (152 aa)) form the Laminin G-like 4 domain. 2 N-linked (GlcNAc...) asparagine glycosylation sites follow: Asn-1047 and Asn-1137. Cys-1147 and Cys-1183 form a disulfide bridge. The helical transmembrane segment at 1218–1238 (VLLACLLVILFLLLILMFFLI) threads the bilayer. Residues 1239–1284 (GRYLHRHKGDYLTHEDQGADGADDPDDAVLHSTTGHQVRKRTEIFI) lie on the Cytoplasmic side of the membrane.

The protein belongs to the neurexin family. Forms a complex with Nrg and Cont. Forms a complex composed of septa junction proteins Nrx-IV/Nrx, Tsf2/MTf, Cont and Nrg during late embryogenesis. The C-terminal region interacts with coracle. Interacts with Patj in cis form. In terms of tissue distribution, found in septate junctions of epithelial and glial cells.

The protein resides in the cell membrane. It localises to the cell junction. It is found in the septate junction. Seems to play a role in the formation and function of septate junctions. Septate junctions, which are the equivalent of vertebrates tight junctions, are characterized by regular arrays of transverse structures that span the intermembrane space and form a physical barrier to diffusion. Required for the blood-brain barrier formation. The polypeptide is Neurexin-4 (Nrx-IV) (Drosophila melanogaster (Fruit fly)).